Reading from the N-terminus, the 117-residue chain is Iron-sulfur cluster insertion protein ErpA (117 aa).

The iron-sulfur cluster site is built by Cys45, Cys109, and Cys111.

Belongs to the HesB/IscA family. In terms of assembly, homodimer. It depends on iron-sulfur cluster as a cofactor.

Functionally, required for insertion of 4Fe-4S clusters for at least IspG. The chain is Iron-sulfur cluster insertion protein ErpA from Chromohalobacter salexigens (strain ATCC BAA-138 / DSM 3043 / CIP 106854 / NCIMB 13768 / 1H11).